A 451-amino-acid polypeptide reads, in one-letter code: MDIATEWTTNANEALTITLEPSKGKGKGKEVSNGSEKSHVFNPIFTYPIYGDVETILGYKNFELNLKMDASTMLPLVTVKFSDKLEFDGISFDDPVERLLEFLPEETATDEAEWEEKRVKELGDGFKPVGKEFGTFSVNSEKYTVHRSTLLDPETLKLHLRLQIFVPLFIEAGSYIDNEDDRWEIYIVYNAEKEIVGFSTVYCYWFYEPSAKESKAPKDASLEQLQKQPFSPTLRKRISQYVILPPFQGKGLGGQLYTLLFSRFYADPNVYEITVEDPSEAFDDLRDRCDLKWLADQGFPSEVFRMLQTTSAHGEKAGDNRTGRTKVVAGAFWTKWLEEHRLKYKLAHRQFARCFEMILLACLEVSSPTKKRNIKDARLFIKKRVYVRNREFLEELGGKIEVMSKLQETYESMEEDYARIMKPVLGYVKDGLKKRDRNDAGNEEAKRVKVE.

Interaction with histone H4 N-terminus regions lie at residues 52–54 (DVE) and 202–204 (YCY). Acetyl-CoA contacts are provided by residues 241-243 (YVI) and 248-254 (QGKGLGG). The active-site Proton donor/acceptor is the Glu276.

It belongs to the HAT1 family. In terms of assembly, component of the HAT-B complex composed of at least HAT1 and HAT2. The HAT-B complex binds to histone H4 tail.

The protein localises to the cytoplasm. It localises to the nucleus. It carries out the reaction L-lysyl-[protein] + acetyl-CoA = N(6)-acetyl-L-lysyl-[protein] + CoA + H(+). Its function is as follows. Catalytic component of the histone acetylase B (HAT-B) complex. Acetylates 'Lys-12' of histone H4 which is required for telomeric silencing. Has intrinsic substrate specificity that modifies lysine in recognition sequence GXGKXG. Involved in DNA double-strand break repair. The polypeptide is Histone acetyltransferase type B catalytic subunit (HAT1) (Yarrowia lipolytica (strain CLIB 122 / E 150) (Yeast)).